The chain runs to 396 residues: 1-deoxy-D-xylulose 5-phosphate reductoisomerase (396 aa).

Positions 10, 11, 12, 13, 38, and 123 each coordinate NADPH. Lys124 contributes to the 1-deoxy-D-xylulose 5-phosphate binding site. Glu125 serves as a coordination point for NADPH. Asp149 serves as a coordination point for Mn(2+). Residues Ser150, Glu151, Ser185, and His208 each coordinate 1-deoxy-D-xylulose 5-phosphate. Glu151 is a binding site for Mn(2+). NADPH is bound at residue Gly214. 1-deoxy-D-xylulose 5-phosphate is bound by residues Ser221, Asn226, Lys227, and Glu230. Residue Glu230 participates in Mn(2+) binding.

It belongs to the DXR family. Mg(2+) serves as cofactor. Mn(2+) is required as a cofactor.

The enzyme catalyses 2-C-methyl-D-erythritol 4-phosphate + NADP(+) = 1-deoxy-D-xylulose 5-phosphate + NADPH + H(+). It participates in isoprenoid biosynthesis; isopentenyl diphosphate biosynthesis via DXP pathway; isopentenyl diphosphate from 1-deoxy-D-xylulose 5-phosphate: step 1/6. Functionally, catalyzes the NADPH-dependent rearrangement and reduction of 1-deoxy-D-xylulose-5-phosphate (DXP) to 2-C-methyl-D-erythritol 4-phosphate (MEP). The chain is 1-deoxy-D-xylulose 5-phosphate reductoisomerase from Shewanella piezotolerans (strain WP3 / JCM 13877).